We begin with the raw amino-acid sequence, 180 residues long: Dual-action ribosomal maturation protein DarP (180 aa).

The protein belongs to the DarP family.

It is found in the cytoplasm. In terms of biological role, member of a network of 50S ribosomal subunit biogenesis factors which assembles along the 30S-50S interface, preventing incorrect 23S rRNA structures from forming. Promotes peptidyl transferase center (PTC) maturation. This is Dual-action ribosomal maturation protein DarP from Chromobacterium violaceum (strain ATCC 12472 / DSM 30191 / JCM 1249 / CCUG 213 / NBRC 12614 / NCIMB 9131 / NCTC 9757 / MK).